We begin with the raw amino-acid sequence, 217 residues long: Pre-mRNA-splicing factor sap62 (217 aa).

The Matrin-type zinc-finger motif lies at 54-84 (FECRLCLTTHANENSYLTHTQGKKHQTNLAR).

The protein belongs to the SF3A2 family. In terms of assembly, belongs to the 40S cdc5-associated complex (or cwf complex), a spliceosome sub-complex reminiscent of a late-stage spliceosome composed of the U2, U5 and U6 snRNAs and at least brr2, cdc5, cwf2/prp3, cwf3/syf1, cwf4/syf3, cwf5/ecm2, spp42/cwf6, cwf7/spf27, cwf8, cwf9, cwf10, cwf11, cwf12, prp45/cwf13, cwf14, cwf15, cwf16, cwf17, cwf18, cwf19, cwf20, cwf21, cwf22, cwf23, cwf24, cwf25, cwf26, cyp7/cwf27, cwf28, cwf29/ist3, lea1, msl1, prp5/cwf1, prp10, prp12/sap130, prp17, prp22, sap61, sap62, sap114, sap145, slu7, smb1, smd1, smd3, smf1, smg1 and syf2.

It localises to the nucleus. Its subcellular location is the cytoplasm. Involved in mRNA splicing where it associates with cdc5 and the other cwf proteins as part of the spliceosome. The sequence is that of Pre-mRNA-splicing factor sap62 (sap62) from Schizosaccharomyces pombe (strain 972 / ATCC 24843) (Fission yeast).